Reading from the N-terminus, the 224-residue chain is 7-cyano-7-deazaguanine synthase (224 aa).

10–20 provides a ligand contact to ATP; the sequence is LSGGLDSATVV. Zn(2+)-binding residues include Cys-189, Cys-199, Cys-202, and Cys-205.

The protein belongs to the QueC family. It depends on Zn(2+) as a cofactor.

The catalysed reaction is 7-carboxy-7-deazaguanine + NH4(+) + ATP = 7-cyano-7-deazaguanine + ADP + phosphate + H2O + H(+). Its pathway is purine metabolism; 7-cyano-7-deazaguanine biosynthesis. Its function is as follows. Catalyzes the ATP-dependent conversion of 7-carboxy-7-deazaguanine (CDG) to 7-cyano-7-deazaguanine (preQ(0)). This is 7-cyano-7-deazaguanine synthase from Pseudomonas putida (strain W619).